Reading from the N-terminus, the 318-residue chain is NADH-ubiquinone oxidoreductase chain 1 (318 aa).

8 helical membrane-spanning segments follow: residues 2-22 (FTINILLLIIPILLAVAFLTL), 70-90 (MFIIAPIMALTLALTMWVPLP), 100-120 (LGVLFMLAMSSLAVYSILWSG), 146-166 (LAIILLSVLLMNGSFTLSTLI), 171-191 (HLWLIFPSWPLTMMWFISTLA), 222-242 (LFFMAEYTNIIMMNAFTTILF), 253-273 (ELYTVNFTIKTLLLTISFLWI), and 294-314 (LPLTLALCMWHVSLPITMSSI).

It belongs to the complex I subunit 1 family.

The protein localises to the mitochondrion inner membrane. The enzyme catalyses a ubiquinone + NADH + 5 H(+)(in) = a ubiquinol + NAD(+) + 4 H(+)(out). In terms of biological role, core subunit of the mitochondrial membrane respiratory chain NADH dehydrogenase (Complex I) that is believed to belong to the minimal assembly required for catalysis. Complex I functions in the transfer of electrons from NADH to the respiratory chain. The immediate electron acceptor for the enzyme is believed to be ubiquinone. The polypeptide is NADH-ubiquinone oxidoreductase chain 1 (MT-ND1) (Rhinoceros unicornis (Greater Indian rhinoceros)).